We begin with the raw amino-acid sequence, 152 residues long: Large ribosomal subunit protein bL9 (152 aa).

The protein belongs to the bacterial ribosomal protein bL9 family.

Binds to the 23S rRNA. The protein is Large ribosomal subunit protein bL9 of Rippkaea orientalis (strain PCC 8801 / RF-1) (Cyanothece sp. (strain PCC 8801)).